A 2546-amino-acid polypeptide reads, in one-letter code: Formin-J (2546 aa).

Disordered stretches follow at residues 1-40 (MEEN…SFVK), 61-108 (ENSN…PLSE), 188-270 (KNIT…PNSA), 369-414 (TTNN…SSSS), 502-541 (TNSF…TPNS), 802-849 (SSIS…NTRK), 879-898 (TSVP…NNNN), 987-1101 (TTNN…GGIG), 1485-1529 (PKSK…ASLS), 1558-1601 (KRSK…FKSP), 1659-1775 (INNI…KVNS), 1840-1869 (VPTT…ETQS), and 2014-2033 (SNLS…SSLE). 2 stretches are compositionally biased toward low complexity: residues 16–37 (NNNE…SSSS) and 62–98 (NSNN…NSTS). Composition is skewed to polar residues over residues 99 to 108 (GSKDNTPLSE) and 188 to 198 (KNITPSKNNSP). 2 stretches are compositionally biased toward low complexity: residues 203–237 (NNNN…NNNN) and 247–270 (NKNS…PNSA). A compositionally biased stretch (polar residues) spans 377–389 (AESLTTYSESSEI). Composition is skewed to low complexity over residues 390 to 414 (STDS…SSSS) and 502 to 513 (TNSFGSSTTTTI). The 54-residue stretch at 391 to 444 (TDSTGVCSSSSSTSSTLSSKSSSSSSFNKFMEFLLIYIEDNDSTNGTWVNGNKL) folds into the FHA domain. In terms of domain architecture, GBD/FH3 spans 457-963 (KITLSTPDFS…SSISNEQEYQ (507 aa)). 2 stretches are compositionally biased toward polar residues: residues 879-891 (TSVP…KNPL) and 992-1007 (SSAK…NKSP). Over residues 1033–1042 (VPPPPPPPPG) the composition is skewed to pro residues. The segment covering 1043 to 1056 (GNNNNESDVPSSSG) has biased composition (low complexity). The segment covering 1057–1097 (GPPPPPPPPPPPGKSSGGGPPPPPPPPPKGGKGGPPPPPPI) has biased composition (pro residues). The FH1 domain occupies 1072–1098 (SGGGPPPPPPPPPKGGKGGPPPPPPIG). The region spanning 1106 to 1495 (KVKEEQPSVP…KSKKYQEQQN (390 aa)) is the FH2 domain. A compositionally biased stretch (polar residues) spans 1492–1502 (EQQNKPTQNND). Low complexity predominate over residues 1507–1529 (SKLSNLPSSSSINDESSSSASLS). One can recognise a DAD domain in the interval 1563–1593 (EQEPVVEPIQITPKVGSAASAEPSPSIKSRD). Residues 1665–1679 (SSSSSSSSSSSSSSS) are compositionally biased toward low complexity. The span at 1687-1717 (HNTESEIKKEFISNSSMDKDKEKIKEKEKGT) shows a compositional bias: basic and acidic residues. Low complexity predominate over residues 1732-1745 (KSTTTSPSSSSSKK). The span at 1746 to 1757 (QIPSLSECLQES) shows a compositional bias: polar residues. 2 stretches are compositionally biased toward low complexity: residues 1763 to 1775 (RSSS…KVNS) and 1841 to 1853 (PTTT…TTQT). A coiled-coil region spans residues 2067-2118 (IDDNQQKQQKQQQQQQQQQQQQQQLPQPQQQQQQQQQQQQQQQQQQQQQQQQ). Low complexity predominate over residues 2121-2154 (QQSTTTTTISTHHPQLKQVQPQSPSSLSQQPTQQ). Disordered stretches follow at residues 2121-2369 (QQST…PKTV), 2381-2473 (SHKK…SYSS), and 2485-2510 (SPSS…LKTP). A compositionally biased stretch (polar residues) spans 2160–2179 (QPSSPLQSHYKPQQKPQTTY). Low complexity-rich tracts occupy residues 2188 to 2206 (ANPF…SNAS) and 2237 to 2256 (SSAS…TPLS). Positions 2274 to 2287 (TPPSSSISNSTATT) are enriched in polar residues. The segment covering 2302–2315 (SPSSSSLEQSSNAS) has biased composition (low complexity). The span at 2332–2342 (FKKHKKSHSKS) shows a compositional bias: basic residues. 3 stretches are compositionally biased toward low complexity: residues 2388 to 2439 (VDQS…SSSS), 2459 to 2473 (NISS…SYSS), and 2485 to 2497 (SPSS…KPSP). Over residues 2499-2508 (AVSSTSSTLK) the composition is skewed to polar residues.

It belongs to the formin homology family. Diaphanous subfamily. In terms of assembly, interacts (via GBD/FH3 domain) with activated Rho-GTPases.

In terms of biological role, formins play an important role in the nucleation of actin and the formation of linear actin filaments. The sequence is that of Formin-J (forJ) from Dictyostelium discoideum (Social amoeba).